We begin with the raw amino-acid sequence, 386 residues long: MEEQGIQCAPPPPAASQTGVPLVNLSHNCSAESHIYQDSIALPWKVLLVALLALITLATTLSNAFVIATVYRTRKLHTPANYLIASLAVTDLLVSILVMPVSTMYTVTGRWTLGQVVCDFWLSSDITCCTASIMHLCVIALDRYWAITDAVEYAAKRTPKRAAIMIALVWVFSISISLPPFFWRQAKAEEEVLTCLVNTDHVLYTVYSTGGAFYLPTLLLIALYGRIYVEARSRILKQTPNKTGKRLTRAQLITDSPGSTTSVTSINSRAPDLPSESGSPVYVNQVKVRVSDALLEKKKLMAARERKATKTLGIILGAFIVCWLPFFIISLVMPICKDACWFHMATLDFFNWLGYLNSLINPIIYTMSNEDFKQAFHKLIRFKCAG.

The Extracellular portion of the chain corresponds to 1 to 42 (MEEQGIQCAPPPPAASQTGVPLVNLSHNCSAESHIYQDSIAL). Residues N24 and N28 are each glycosylated (N-linked (GlcNAc...) asparagine). The helical transmembrane segment at 43–68 (PWKVLLVALLALITLATTLSNAFVIA) threads the bilayer. Over 69 to 82 (TVYRTRKLHTPANY) the chain is Cytoplasmic. The helical transmembrane segment at 83 to 107 (LIASLAVTDLLVSILVMPVSTMYTV) threads the bilayer. Residues 108–115 (TGRWTLGQ) lie on the Extracellular side of the membrane. A helical membrane pass occupies residues 116 to 141 (VVCDFWLSSDITCCTASIMHLCVIAL). C118 and C195 form a disulfide bridge. Residues D125 and T130 each coordinate ergotamine. Positions 142–144 (DRY) match the DRY motif; important for ligand-induced conformation changes and signaling motif. The Cytoplasmic segment spans residues 142–161 (DRYWAITDAVEYAAKRTPKR). Residues 162–180 (AAIMIALVWVFSISISLPP) traverse the membrane as a helical segment. The Extracellular segment spans residues 181-201 (FFWRQAKAEEEVLTCLVNTDH). Residue V197 participates in ergotamine binding. Residues 202 to 225 (VLYTVYSTGGAFYLPTLLLIALYG) form a helical membrane-spanning segment. The Cytoplasmic segment spans residues 226–311 (RIYVEARSRI…AARERKATKT (86 aa)). A compositionally biased stretch (polar residues) spans 255–268 (DSPGSTTSVTSINS). Residues 255–278 (DSPGSTTSVTSINSRAPDLPSESG) form a disordered region. Residues 312–333 (LGIILGAFIVCWLPFFIISLVM) form a helical membrane-spanning segment. The Extracellular portion of the chain corresponds to 334-343 (PICKDACWFH). Residues 344–366 (MATLDFFNWLGYLNSLINPIIYT) form a helical membrane-spanning segment. The NPxxY motif; important for ligand-induced conformation changes and signaling motif lies at 361 to 365 (NPIIY). At 367–386 (MSNEDFKQAFHKLIRFKCAG) the chain is on the cytoplasmic side. The S-palmitoyl cysteine moiety is linked to residue C384.

The protein belongs to the G-protein coupled receptor 1 family. As to quaternary structure, homodimer. Heterodimer with HTR1D. Phosphorylated. Desensitization of the receptor may be mediated by its phosphorylation. In terms of processing, palmitoylated.

It is found in the cell membrane. Its function is as follows. G-protein coupled receptor for 5-hydroxytryptamine (serotonin). Also functions as a receptor for ergot alkaloid derivatives, various anxiolytic and antidepressant drugs and other psychoactive substances, such as lysergic acid diethylamide (LSD). Ligand binding causes a conformation change that triggers signaling via guanine nucleotide-binding proteins (G proteins) and modulates the activity of downstream effectors, such as adenylate cyclase. HTR1B is coupled to G(i)/G(o) G alpha proteins and mediates inhibitory neurotransmission by inhibiting adenylate cyclase activity. Arrestin family members inhibit signaling via G proteins and mediate activation of alternative signaling pathways. Regulates the release of 5-hydroxytryptamine, dopamine and acetylcholine in the brain, and thereby affects neural activity, nociceptive processing, pain perception, mood and behavior. Besides, plays a role in vasoconstriction of cerebral arteries. This Cricetulus griseus (Chinese hamster) protein is 5-hydroxytryptamine receptor 1B (HTR1B).